The chain runs to 288 residues: 4-diphosphocytidyl-2-C-methyl-D-erythritol kinase (288 aa).

Residue Lys-8 is part of the active site. Position 92-102 (92-102) interacts with ATP; the sequence is PVAAGMAGGST. Asp-134 is an active-site residue.

It belongs to the GHMP kinase family. IspE subfamily.

It catalyses the reaction 4-CDP-2-C-methyl-D-erythritol + ATP = 4-CDP-2-C-methyl-D-erythritol 2-phosphate + ADP + H(+). It participates in isoprenoid biosynthesis; isopentenyl diphosphate biosynthesis via DXP pathway; isopentenyl diphosphate from 1-deoxy-D-xylulose 5-phosphate: step 3/6. Functionally, catalyzes the phosphorylation of the position 2 hydroxy group of 4-diphosphocytidyl-2C-methyl-D-erythritol. The protein is 4-diphosphocytidyl-2-C-methyl-D-erythritol kinase of Clostridium perfringens (strain SM101 / Type A).